Consider the following 300-residue polypeptide: Acetylglutamate kinase (300 aa).

Residues 73–74 (GG), Arg-95, and Asn-197 each bind substrate.

The protein belongs to the acetylglutamate kinase family. ArgB subfamily.

Its subcellular location is the cytoplasm. It carries out the reaction N-acetyl-L-glutamate + ATP = N-acetyl-L-glutamyl 5-phosphate + ADP. The protein operates within amino-acid biosynthesis; L-arginine biosynthesis; N(2)-acetyl-L-ornithine from L-glutamate: step 2/4. Catalyzes the ATP-dependent phosphorylation of N-acetyl-L-glutamate. This Polynucleobacter necessarius subsp. necessarius (strain STIR1) protein is Acetylglutamate kinase.